A 258-amino-acid chain; its full sequence is Imidazole glycerol phosphate synthase subunit HisF (258 aa).

Active-site residues include aspartate 11 and aspartate 130.

The protein belongs to the HisA/HisF family. In terms of assembly, heterodimer of HisH and HisF.

The protein resides in the cytoplasm. It carries out the reaction 5-[(5-phospho-1-deoxy-D-ribulos-1-ylimino)methylamino]-1-(5-phospho-beta-D-ribosyl)imidazole-4-carboxamide + L-glutamine = D-erythro-1-(imidazol-4-yl)glycerol 3-phosphate + 5-amino-1-(5-phospho-beta-D-ribosyl)imidazole-4-carboxamide + L-glutamate + H(+). The protein operates within amino-acid biosynthesis; L-histidine biosynthesis; L-histidine from 5-phospho-alpha-D-ribose 1-diphosphate: step 5/9. IGPS catalyzes the conversion of PRFAR and glutamine to IGP, AICAR and glutamate. The HisF subunit catalyzes the cyclization activity that produces IGP and AICAR from PRFAR using the ammonia provided by the HisH subunit. The polypeptide is Imidazole glycerol phosphate synthase subunit HisF (Haemophilus influenzae (strain 86-028NP)).